We begin with the raw amino-acid sequence, 269 residues long: Putative pyruvate, phosphate dikinase regulatory protein (269 aa).

Glycine 151–threonine 158 serves as a coordination point for ADP.

Belongs to the pyruvate, phosphate/water dikinase regulatory protein family. PDRP subfamily.

The catalysed reaction is N(tele)-phospho-L-histidyl/L-threonyl-[pyruvate, phosphate dikinase] + ADP = N(tele)-phospho-L-histidyl/O-phospho-L-threonyl-[pyruvate, phosphate dikinase] + AMP + H(+). It catalyses the reaction N(tele)-phospho-L-histidyl/O-phospho-L-threonyl-[pyruvate, phosphate dikinase] + phosphate + H(+) = N(tele)-phospho-L-histidyl/L-threonyl-[pyruvate, phosphate dikinase] + diphosphate. Functionally, bifunctional serine/threonine kinase and phosphorylase involved in the regulation of the pyruvate, phosphate dikinase (PPDK) by catalyzing its phosphorylation/dephosphorylation. The chain is Putative pyruvate, phosphate dikinase regulatory protein from Geobacter sulfurreducens (strain ATCC 51573 / DSM 12127 / PCA).